Consider the following 459-residue polypeptide: MQIQFHLYNTLSRTKEVFNPQDQANVKMYVCGPTVYYNPHIGNSRSGVVYDLLYRIVIKIFGEKAVKYVRNITDVDDKIIDRAALLGVTIDELTDKVTKEFHKNMAYLGCMLPSIEPKATKHIDVMIAIIERLIAKDHAYIADNHVYFDVLSAPNYTELSNRNLEEMFEGVHVENSKTKKNPQDFVLWKPAKQNESANMNFESPWGLGRPGWHIECSAMSYKYLGENFDIHGGGADLIFPHHTNEIAQSRCAFPSSTYAKYWVHNGFLTVNGEKMSKSLGNFITVRDLMDKQIQGEVVRLFLLSSHYRRPLDYNDKAIEDAKKTLNYWYRAIENINVQKIDLPHDFMQSLLDDMNTPLAVKIINDYAKGVFISKTEEERQLNASAIITCANFIGLMNKTPNEWFNSGVDELYVNELVNKRLEAKKQKNWLLADQIRNQLLEEKIILEDRPDGTTIWRKE.

Cysteine 31 provides a ligand contact to Zn(2+). Positions 33-43 (PTVYYNPHIGN) match the 'HIGH' region motif. Cysteine 216, histidine 241, and glutamate 245 together coordinate Zn(2+). The 'KMSKS' region signature appears at 274–278 (KMSKS). Lysine 277 contacts ATP.

Belongs to the class-I aminoacyl-tRNA synthetase family. Monomer. The cofactor is Zn(2+).

The protein localises to the cytoplasm. The catalysed reaction is tRNA(Cys) + L-cysteine + ATP = L-cysteinyl-tRNA(Cys) + AMP + diphosphate. This Rickettsia africae (strain ESF-5) protein is Cysteine--tRNA ligase.